The primary structure comprises 125 residues: uncharacterized protein (125 aa).

A helical membrane pass occupies residues 7–29 (NCMFLYVYTDVCVRLCASIFYIM).

The protein resides in the membrane. This is an uncharacterized protein from Saccharomyces cerevisiae (strain ATCC 204508 / S288c) (Baker's yeast).